The following is a 392-amino-acid chain: Phosphoglycerate kinase (392 aa).

Residues 21 to 23 (DFN), Arg-36, 59 to 62 (HLGR), Arg-118, and Arg-151 each bind substrate. ATP is bound by residues Lys-201, Gly-292, Glu-323, and 349–352 (GGDS).

It belongs to the phosphoglycerate kinase family. In terms of assembly, monomer.

It is found in the cytoplasm. It catalyses the reaction (2R)-3-phosphoglycerate + ATP = (2R)-3-phospho-glyceroyl phosphate + ADP. It functions in the pathway carbohydrate degradation; glycolysis; pyruvate from D-glyceraldehyde 3-phosphate: step 2/5. The polypeptide is Phosphoglycerate kinase (Borrelia duttonii (strain Ly)).